Here is a 452-residue protein sequence, read N- to C-terminus: Chromosomal replication initiator protein DnaA (452 aa).

The domain I, interacts with DnaA modulators stretch occupies residues 1–72 (MPDMLTLWTD…LVEYAYQAAH (72 aa)). Residues 72 to 114 (HEDIQPVLILENERQQQATLKAKTAPVAAGEPVEPTPTFMKET) are domain II. The tract at residues 115-331 (ALNSRYTFDT…GALARVQAYS (217 aa)) is domain III, AAA+ region. Residues G159, G161, K162, and T163 each coordinate ATP. Residues 332–452 (QLMHQPIATD…IDSLKDDLRR (121 aa)) form a domain IV, binds dsDNA region.

The protein belongs to the DnaA family. As to quaternary structure, oligomerizes as a right-handed, spiral filament on DNA at oriC.

It localises to the cytoplasm. In terms of biological role, plays an essential role in the initiation and regulation of chromosomal replication. ATP-DnaA binds to the origin of replication (oriC) to initiate formation of the DNA replication initiation complex once per cell cycle. Binds the DnaA box (a 9 base pair repeat at the origin) and separates the double-stranded (ds)DNA. Forms a right-handed helical filament on oriC DNA; dsDNA binds to the exterior of the filament while single-stranded (ss)DNA is stabiized in the filament's interior. The ATP-DnaA-oriC complex binds and stabilizes one strand of the AT-rich DNA unwinding element (DUE), permitting loading of DNA polymerase. After initiation quickly degrades to an ADP-DnaA complex that is not apt for DNA replication. Binds acidic phospholipids. The sequence is that of Chromosomal replication initiator protein DnaA from Levilactobacillus brevis (strain ATCC 367 / BCRC 12310 / CIP 105137 / JCM 1170 / LMG 11437 / NCIMB 947 / NCTC 947) (Lactobacillus brevis).